The chain runs to 272 residues: Undecaprenyl-diphosphatase (272 aa).

8 consecutive transmembrane segments (helical) span residues 4–24 (FEVI…FLPI), 43–63 (GGRV…CWLY), 86–106 (ISVL…VDFI), 109–129 (VLFS…IIFW), 145–165 (ITFK…IPGT), 186–206 (TEFS…FDLI), 222–242 (VGFV…VLFV), and 249–269 (VFAW…MFFN).

It belongs to the UppP family.

The protein resides in the cell inner membrane. The enzyme catalyses di-trans,octa-cis-undecaprenyl diphosphate + H2O = di-trans,octa-cis-undecaprenyl phosphate + phosphate + H(+). Catalyzes the dephosphorylation of undecaprenyl diphosphate (UPP). Confers resistance to bacitracin. The polypeptide is Undecaprenyl-diphosphatase (Acinetobacter baumannii (strain AB307-0294)).